We begin with the raw amino-acid sequence, 228 residues long: Ras-related protein Rab-32D (228 aa).

Position 16–23 (16–23) interacts with GTP; the sequence is GDVNVGKT. The short motif at 38-46 is the Effector region element; that stretch reads YKSTIGADF. Residues 64–68 and 128–131 each bind GTP; these read DTAGQ and NKSD. The disordered stretch occupies residues 183–228; the sequence is SDNEQFNDSPDEETSSITLLGTSKKHDNTNPNKPSTSSPSSCFNCK. The span at 185–196 shows a compositional bias: acidic residues; sequence NEQFNDSPDEET. The segment covering 211 to 228 has biased composition (low complexity); the sequence is TNPNKPSTSSPSSCFNCK. The S-geranylgeranyl cysteine moiety is linked to residue Cys224.

Belongs to the small GTPase superfamily. Rab family.

This is Ras-related protein Rab-32D (rab32D) from Dictyostelium discoideum (Social amoeba).